A 212-amino-acid chain; its full sequence is Dephospho-CoA kinase (212 aa).

The DPCK domain occupies 6–211 (RLGLTGGIGS…LSCQPLSPNQ (206 aa)). 14–19 (GSGKST) provides a ligand contact to ATP.

Belongs to the CoaE family.

It localises to the cytoplasm. It carries out the reaction 3'-dephospho-CoA + ATP = ADP + CoA + H(+). It participates in cofactor biosynthesis; coenzyme A biosynthesis; CoA from (R)-pantothenate: step 5/5. Functionally, catalyzes the phosphorylation of the 3'-hydroxyl group of dephosphocoenzyme A to form coenzyme A. This is Dephospho-CoA kinase from Albidiferax ferrireducens (strain ATCC BAA-621 / DSM 15236 / T118) (Rhodoferax ferrireducens).